Consider the following 137-residue polypeptide: uncharacterized protein (137 aa).

Residues 1 to 10 (MISVDVPGHP) show a composition bias toward low complexity. The disordered stretch occupies residues 1 to 23 (MISVDVPGHPGDAGGGGGGARKV). Residues 11-20 (GDAGGGGGGA) are compositionally biased toward gly residues.

This is an uncharacterized protein from Human adenovirus C serotype 2 (HAdV-2).